Here is a 512-residue protein sequence, read N- to C-terminus: Sugar transport protein MST7 (512 aa).

The Cytoplasmic portion of the chain corresponds to 1 to 17; the sequence is MENAGAGDGAPKHYPGK. Residues 18 to 38 traverse the membrane as a helical segment; that stretch reads MTVFVFIACLVASSGGLIFGY. Topologically, residues 39 to 81 are extracellular; it reads DIGISGGVTSMDPFLSRFFPSVYAKEKEVVDTNQYCKFDSEPL. A helical membrane pass occupies residues 82-102; it reads TLFTSSLYLAALIASLFASVI. The Cytoplasmic portion of the chain corresponds to 103–116; the sequence is TRKLGRKMTMLGGG. Residues 117–137 form a helical membrane-spanning segment; sequence FIFLIGAVLNGAAVNVAMLII. Residues 138-139 are Extracellular-facing; that stretch reads GR. Residues 140–160 traverse the membrane as a helical segment; that stretch reads ILLGIGVGFSIQAVPLYLSEM. Over 161–166 the chain is Cytoplasmic; it reads APAKMR. Residues 167–187 form a helical membrane-spanning segment; sequence GMLNIIFQLMITVGILFANLI. The Extracellular portion of the chain corresponds to 188 to 201; it reads NYFTDKIAGGWGWR. A helical membrane pass occupies residues 202–222; it reads VSLGLAAVPAVIMTVGSILLP. Residues 223–294 are Cytoplasmic-facing; it reads DTPNSLLSRG…MSVLIPTLQQ (72 aa). The chain crosses the membrane as a helical span at residues 295–315; the sequence is LTGINVVMFYAPVLFKTIGFG. The Extracellular segment spans residues 316–320; it reads GTASL. The helical transmembrane segment at 321-341 threads the bilayer; that stretch reads MSAVITGLVNMFATFVSIATV. The Cytoplasmic segment spans residues 342–347; the sequence is DRFGRR. The helical transmembrane segment at 348 to 368 threads the bilayer; it reads VLFIQGGIQMIIAQFILGTLI. The Extracellular portion of the chain corresponds to 369–385; sequence AVKFGTAGVANISQGYA. A helical transmembrane segment spans residues 386–406; the sequence is IVVVLFICLFVSAFAWSWGPL. Residues 407 to 425 lie on the Cytoplasmic side of the membrane; the sequence is GWLVPSEIFPLEIRSAAQS. The chain crosses the membrane as a helical span at residues 426–446; that stretch reads VVVVFNMAFTFFIAQIFLMML. Topologically, residues 447 to 450 are extracellular; it reads CRLK. A helical transmembrane segment spans residues 451-471; the sequence is FGLFFFFGAMELIMTGFVLVF. Topologically, residues 472 to 512 are cytoplasmic; that stretch reads LPETKGIPIEEMDRIWGEHWYWSRFVGAGRNRVMQMASTNV.

The protein belongs to the major facilitator superfamily. Sugar transporter (TC 2.A.1.1) family.

The protein localises to the membrane. Functionally, mediates active uptake of hexoses by sugar:proton symport. This chain is Sugar transport protein MST7, found in Oryza sativa subsp. japonica (Rice).